A 642-amino-acid polypeptide reads, in one-letter code: Putative ankyrin repeat protein L91 (642 aa).

ANK repeat units follow at residues 42–76 (HFTK…VKNP), 85–118 (EGWT…NPNI), 153–186 (NGFT…NVDS), 190–224 (NGET…TLHK), 227–256 (NGFT…DVNA), 260–288 (EGKS…EINH), 292–322 (NDIN…NPNE), 326–360 (NKNA…NPNI), 365–397 (SRTI…NVNA), 401–434 (EGRT…NVNH), 438–470 (DGAH…DVNI), 475–514 (KKWT…NVNA), 518–550 (YGNN…NVNH), and 554–587 (NGDT…NPNI).

This Acanthamoeba polyphaga (Amoeba) protein is Putative ankyrin repeat protein L91.